A 65-amino-acid chain; its full sequence is 7 kDa A-type inclusion protein (65 aa).

Over residues 1 to 20 the composition is skewed to polar residues; the sequence is MSNQNIPQLSEYQTSVSQVA. Residues 1–31 are disordered; sequence MSNQNIPQLSEYQTSVSQVAVTPPPKPETPQ.

The protein is 7 kDa A-type inclusion protein of Vaccinia virus (strain Copenhagen) (VACV).